We begin with the raw amino-acid sequence, 293 residues long: Nucleotide-binding protein OB2468 (293 aa).

Glycine 14–threonine 21 is an ATP binding site. Position 65 to 68 (aspartate 65 to glycine 68) interacts with GTP.

It belongs to the RapZ-like family.

Its function is as follows. Displays ATPase and GTPase activities. The polypeptide is Nucleotide-binding protein OB2468 (Oceanobacillus iheyensis (strain DSM 14371 / CIP 107618 / JCM 11309 / KCTC 3954 / HTE831)).